Reading from the N-terminus, the 213-residue chain is Pyridoxine/pyridoxamine 5'-phosphate oxidase 2 (213 aa).

Substrate-binding positions include 9–12 (RQRY) and lysine 67. FMN-binding positions include 62–67 (RTVLLK), 77–78 (FT), lysine 84, and glutamine 106. Substrate-binding residues include tyrosine 124, arginine 128, and serine 132. Residues 141-142 (QS) and tryptophan 186 contribute to the FMN site. Substrate is bound at residue 192 to 194 (RLH). FMN is bound at residue arginine 196.

It belongs to the pyridoxamine 5'-phosphate oxidase family. In terms of assembly, homodimer. The cofactor is FMN.

It catalyses the reaction pyridoxamine 5'-phosphate + O2 + H2O = pyridoxal 5'-phosphate + H2O2 + NH4(+). The catalysed reaction is pyridoxine 5'-phosphate + O2 = pyridoxal 5'-phosphate + H2O2. Its pathway is cofactor metabolism; pyridoxal 5'-phosphate salvage; pyridoxal 5'-phosphate from pyridoxamine 5'-phosphate: step 1/1. It participates in cofactor metabolism; pyridoxal 5'-phosphate salvage; pyridoxal 5'-phosphate from pyridoxine 5'-phosphate: step 1/1. In terms of biological role, catalyzes the oxidation of either pyridoxine 5'-phosphate (PNP) or pyridoxamine 5'-phosphate (PMP) into pyridoxal 5'-phosphate (PLP). The protein is Pyridoxine/pyridoxamine 5'-phosphate oxidase 2 of Hydrogenovibrio crunogenus (strain DSM 25203 / XCL-2) (Thiomicrospira crunogena).